The following is a 421-amino-acid chain: Carboxypeptidase A4 (421 aa).

Positions Met-1–Cys-16 are cleaved as a signal peptide. The propeptide at Gly-17 to Arg-113 is activation peptide. A protein-binding residues include Pro-69, Val-71, Asn-119, Tyr-123, His-124, Ser-125, Glu-127, and Phe-163. One can recognise a Peptidase M14 domain in the interval Ala-122–Val-416. Residues His-181 and Glu-184 each coordinate Zn(2+). Arg-196, Lys-197, and Ser-248 together coordinate a protein. Cysteines 250 and 273 form a disulfide. Asn-260 carries an N-linked (GlcNAc...) asparagine glycan. A protein is bound at residue Asp-270. A Zn(2+)-binding site is contributed by His-308. Glu-382 acts as the Proton donor/acceptor in catalysis.

The protein belongs to the peptidase M14 family. As to quaternary structure, monomer. Interacts with LXN. The cofactor is Zn(2+). In terms of tissue distribution, fetal expression in the adrenal gland, brain, heart, intestine, kidney, liver and lung. Except for fetal brain that shows no imprinting, expression was found preferentially from the maternal allele.

The protein resides in the secreted. Inhibited by interaction with the metallocarboxypeptidase inhibitor (MCPI) from N.versicolor that binds to the catalytic zinc ion. Also inhibited by interaction with the S.magnifica carboxypeptidase inhibitor SmCI that penetrates the active site groove and inhibits activity by emulating a C-terminal substrate. Additionally inhibited by a carboxypeptidase inhibitor from H.medicinalis (leech) and R.bursa (tick). In terms of biological role, metalloprotease that cleaves hydrophobic C-terminal residues with a preference for -Phe, -Leu, -Ile, -Met, -Tyr and -Val. May function in peptide hormone and/or neuropeptide catabolism. This chain is Carboxypeptidase A4 (CPA4), found in Homo sapiens (Human).